We begin with the raw amino-acid sequence, 214 residues long: Ras-related protein RABH1c (214 aa).

Residue 16 to 23 participates in GTP binding; the sequence is GDQSVGKT. The Effector region motif lies at 38–46; that stretch reads YQPTIGIDF. Residues 64–68, 123–126, and 153–154 each bind GTP; these read DTAGQ, NKTD, and SA. The tract at residues 194–214 is disordered; the sequence is TSNSSQGEQQGGAGGGGGCSC. Residues 202–214 are compositionally biased toward gly residues; sequence QQGGAGGGGGCSC. S-geranylgeranyl cysteine attachment occurs at residues C212 and C214. C214 carries the post-translational modification Cysteine methyl ester.

This sequence belongs to the small GTPase superfamily. Rab family. In terms of assembly, interacts with the C-terminus of GC5, but not with GC3.

Its subcellular location is the golgi apparatus membrane. The protein resides in the cytoplasm. It localises to the cytosol. In terms of biological role, protein transport. Regulator of membrane traffic from the Golgi apparatus towards the endoplasmic reticulum (ER). The polypeptide is Ras-related protein RABH1c (RABH1C) (Arabidopsis thaliana (Mouse-ear cress)).